A 369-amino-acid chain; its full sequence is uncharacterized protein (369 aa).

This sequence to A.pernix APE1276 and APE1804.

This is an uncharacterized protein from Saccharolobus solfataricus (strain ATCC 35092 / DSM 1617 / JCM 11322 / P2) (Sulfolobus solfataricus).